The following is a 338-amino-acid chain: Inositol 2-dehydrogenase 3 (338 aa).

This sequence belongs to the Gfo/Idh/MocA family. Homotetramer.

It catalyses the reaction myo-inositol + NAD(+) = scyllo-inosose + NADH + H(+). Its function is as follows. Involved in the oxidation of myo-inositol (MI) to 2-keto-myo-inositol (2KMI or 2-inosose). The chain is Inositol 2-dehydrogenase 3 from Saccharopolyspora erythraea (strain ATCC 11635 / DSM 40517 / JCM 4748 / NBRC 13426 / NCIMB 8594 / NRRL 2338).